A 254-amino-acid chain; its full sequence is DNA repair protein RecO (254 aa).

Belongs to the RecO family.

Its function is as follows. Involved in DNA repair and RecF pathway recombination. In Verminephrobacter eiseniae (strain EF01-2), this protein is DNA repair protein RecO.